We begin with the raw amino-acid sequence, 412 residues long: ATP phosphoribosyltransferase regulatory subunit (412 aa).

The protein belongs to the class-II aminoacyl-tRNA synthetase family. HisZ subfamily. In terms of assembly, heteromultimer composed of HisG and HisZ subunits.

The protein resides in the cytoplasm. It functions in the pathway amino-acid biosynthesis; L-histidine biosynthesis; L-histidine from 5-phospho-alpha-D-ribose 1-diphosphate: step 1/9. Its function is as follows. Required for the first step of histidine biosynthesis. May allow the feedback regulation of ATP phosphoribosyltransferase activity by histidine. This Dehalococcoides mccartyi (strain CBDB1) protein is ATP phosphoribosyltransferase regulatory subunit.